Here is an 867-residue protein sequence, read N- to C-terminus: Heat shock 70 kDa protein 17 (867 aa).

The first 24 residues, 1 to 24 (MGKIFSWLVVLLSLISLVPVPSES), serve as a signal peptide directing secretion. Composition is skewed to polar residues over residues 560 to 575 (TIDS…ATDE) and 587 to 598 (DAENSTASNTTA). Disordered regions lie at residues 560 to 607 (TIDS…ASLG) and 829 to 867 (PKPK…HDEL). Residues 833–867 (PKIEKVTKTENTTKEEEQSKSSDEAAKEEESHDEL) show a composition bias toward basic and acidic residues. A Prevents secretion from ER motif is present at residues 865–867 (DEL).

This sequence belongs to the heat shock protein 70 (TC 1.A.33) family. HSP110/SSE subfamily.

The protein resides in the endoplasmic reticulum lumen. In Arabidopsis thaliana (Mouse-ear cress), this protein is Heat shock 70 kDa protein 17 (HSP70-17).